The sequence spans 167 residues: SsrA-binding protein (167 aa).

The span at 139 to 158 (QNHDKRDAAKERDWQRDKQR) shows a compositional bias: basic and acidic residues. The segment at 139–167 (QNHDKRDAAKERDWQRDKQRVMRRHNRDA) is disordered.

It belongs to the SmpB family.

The protein resides in the cytoplasm. In terms of biological role, required for rescue of stalled ribosomes mediated by trans-translation. Binds to transfer-messenger RNA (tmRNA), required for stable association of tmRNA with ribosomes. tmRNA and SmpB together mimic tRNA shape, replacing the anticodon stem-loop with SmpB. tmRNA is encoded by the ssrA gene; the 2 termini fold to resemble tRNA(Ala) and it encodes a 'tag peptide', a short internal open reading frame. During trans-translation Ala-aminoacylated tmRNA acts like a tRNA, entering the A-site of stalled ribosomes, displacing the stalled mRNA. The ribosome then switches to translate the ORF on the tmRNA; the nascent peptide is terminated with the 'tag peptide' encoded by the tmRNA and targeted for degradation. The ribosome is freed to recommence translation, which seems to be the essential function of trans-translation. The polypeptide is SsrA-binding protein (Xanthomonas oryzae pv. oryzae (strain PXO99A)).